We begin with the raw amino-acid sequence, 375 residues long: Succinyl-diaminopimelate desuccinylase (375 aa).

H66 serves as a coordination point for Zn(2+). D68 is a catalytic residue. D99 provides a ligand contact to Zn(2+). The active-site Proton acceptor is E133. The Zn(2+) site is built by E134, E162, and H348.

Belongs to the peptidase M20A family. DapE subfamily. As to quaternary structure, homodimer. It depends on Zn(2+) as a cofactor. Co(2+) serves as cofactor.

It carries out the reaction N-succinyl-(2S,6S)-2,6-diaminopimelate + H2O = (2S,6S)-2,6-diaminopimelate + succinate. It functions in the pathway amino-acid biosynthesis; L-lysine biosynthesis via DAP pathway; LL-2,6-diaminopimelate from (S)-tetrahydrodipicolinate (succinylase route): step 3/3. Catalyzes the hydrolysis of N-succinyl-L,L-diaminopimelic acid (SDAP), forming succinate and LL-2,6-diaminopimelate (DAP), an intermediate involved in the bacterial biosynthesis of lysine and meso-diaminopimelic acid, an essential component of bacterial cell walls. This chain is Succinyl-diaminopimelate desuccinylase, found in Klebsiella pneumoniae subsp. pneumoniae (strain ATCC 700721 / MGH 78578).